A 195-amino-acid chain; its full sequence is 3-isopropylmalate dehydratase small subunit (195 aa).

Belongs to the LeuD family. LeuD type 1 subfamily. As to quaternary structure, heterodimer of LeuC and LeuD.

It catalyses the reaction (2R,3S)-3-isopropylmalate = (2S)-2-isopropylmalate. It participates in amino-acid biosynthesis; L-leucine biosynthesis; L-leucine from 3-methyl-2-oxobutanoate: step 2/4. Its function is as follows. Catalyzes the isomerization between 2-isopropylmalate and 3-isopropylmalate, via the formation of 2-isopropylmaleate. This chain is 3-isopropylmalate dehydratase small subunit, found in Salinispora arenicola (strain CNS-205).